The following is a 124-amino-acid chain: Small ribosomal subunit protein uS12 (124 aa).

Asp89 bears the 3-methylthioaspartic acid mark. Residues 103–124 are disordered; sequence DTAGVQKRRQGRSKYGAKRPKS. Residues 108–124 show a composition bias toward basic residues; the sequence is QKRRQGRSKYGAKRPKS.

The protein belongs to the universal ribosomal protein uS12 family. As to quaternary structure, part of the 30S ribosomal subunit. Contacts proteins S8 and S17. May interact with IF1 in the 30S initiation complex.

Its function is as follows. With S4 and S5 plays an important role in translational accuracy. In terms of biological role, interacts with and stabilizes bases of the 16S rRNA that are involved in tRNA selection in the A site and with the mRNA backbone. Located at the interface of the 30S and 50S subunits, it traverses the body of the 30S subunit contacting proteins on the other side and probably holding the rRNA structure together. The combined cluster of proteins S8, S12 and S17 appears to hold together the shoulder and platform of the 30S subunit. This Methylococcus capsulatus (strain ATCC 33009 / NCIMB 11132 / Bath) protein is Small ribosomal subunit protein uS12.